A 156-amino-acid chain; its full sequence is Ribosomal RNA large subunit methyltransferase H (156 aa).

S-adenosyl-L-methionine is bound by residues L73, G104, and 123–128; that span reads LSSLTL.

It belongs to the RNA methyltransferase RlmH family. As to quaternary structure, homodimer.

The protein localises to the cytoplasm. The enzyme catalyses pseudouridine(1915) in 23S rRNA + S-adenosyl-L-methionine = N(3)-methylpseudouridine(1915) in 23S rRNA + S-adenosyl-L-homocysteine + H(+). Its function is as follows. Specifically methylates the pseudouridine at position 1915 (m3Psi1915) in 23S rRNA. In Neisseria meningitidis serogroup C (strain 053442), this protein is Ribosomal RNA large subunit methyltransferase H.